The chain runs to 267 residues: MKIGTQATSLAVLHNQESHAPQAPIAVRPEPAHAIPEIPLDLAIRPRTRGIHPFLAMTLGDKGCASSSGVSLEDDSHTQVSLSDFSVASRDVNHNNICAGLSTEWLVMSSDGDAESRMDHLDYNGEGQSRGSERHQVYNDALRAALSNDDEAPFFTASTAVIEDAGFSLRREPKTVHASGGSAQLGQTVAHDVAQSGRKHLLSLRFANVQGHAIACSCEGSQFKLFDPNLGEFQSSRSAAPQLIKGLIDHYNSLNYDVACVNEFRVS.

Gly63 carries N-myristoyl glycine; by host lipidation. Active-site residues include Cys98, His212, and Asp227.

It belongs to the peptidase C58 family. In terms of assembly, in infected plant cells, the 28 kDa product interacts with PBS1. Autocleaved. This function is essential for myristoylation in infected plant cell and for eliciting the plant hypersensitive response. In terms of processing, myristoylation of 28 kDa product in infected plant cells; it mediates the localization to membranes.

It is found in the secreted. The protein localises to the host membrane. In terms of biological role, cysteine protease avirulence protein, which is essential during infection of plant cells from cultivar-specific of beans and Arabidopsis thaliana. The autocleavage of the protein is required for virulence function. May act by affecting the plant defense system. In plants lacking R3 or RPS5 resistance genes, it probably impairs the plant defense system and leads to the bacteria multiplication. In contrast, in plants containing the R3 or RPS5 protein, it is unable to induce disease symptoms, explaining its avirulence name. The 7 kDa product is required for the type-III translocation from Pseudomonas strains to the plant, but are partially dispensable for effector recognition following in planta expression. In infected plants, it acts by cleaving the PBS1 protein, which leads to resistance or disease, depending on the presence or absence of RPS5, respectively. Targets the Arabidopsis kinases PBS1, BIK1, PBL1, PBL2, PBL3, PBL5, PBL7, PBL9 and PBL11 for cleavage in vitro. Can block recognition of AvrB avirulence factor by plant cells by cleaving Arabidopsis RIPK kinase and suppressing Arabidopsis RPM1 activation. Cannot block AvrRpm1-induced activation of RPM1. In Pseudomonas savastanoi pv. phaseolicola (Pseudomonas syringae pv. phaseolicola), this protein is Cysteine protease avirulence protein AvrPphB (avrPph3).